Consider the following 871-residue polypeptide: Protein arg-6, mitochondrial (871 aa).

Residues 1–44 constitute a mitochondrion transit peptide; the sequence is MYSACAVALRAGARRVVRRVPKSARALPRAAAARRQISTTAARS. One can recognise an N-acetyltransferase domain in the interval 336–488; that stretch reads QASTSLSEFK…DFTENGRAML (153 aa). Cys-689 is an active-site residue.

In the N-terminal section; belongs to the acetylglutamate kinase family. This sequence in the C-terminal section; belongs to the NAGSA dehydrogenase family. Post-translationally, the protein precursor is cleaved into the two biologically active enzymes, the kinase and the reductase.

The protein resides in the mitochondrion. The enzyme catalyses N-acetyl-L-glutamate 5-semialdehyde + phosphate + NADP(+) = N-acetyl-L-glutamyl 5-phosphate + NADPH + H(+). It carries out the reaction N-acetyl-L-glutamate + ATP = N-acetyl-L-glutamyl 5-phosphate + ADP. The protein operates within amino-acid biosynthesis; L-arginine biosynthesis; N(2)-acetyl-L-ornithine from L-glutamate: step 2/4. It participates in amino-acid biosynthesis; L-arginine biosynthesis; N(2)-acetyl-L-ornithine from L-glutamate: step 3/4. This is Protein arg-6, mitochondrial (arg-6) from Neurospora crassa (strain ATCC 24698 / 74-OR23-1A / CBS 708.71 / DSM 1257 / FGSC 987).